The chain runs to 446 residues: Nuclear envelope integral membrane protein 1 (446 aa).

The first 37 residues, 1–37 (MAGFMKYKSVSTTIETVRLKLILTAVLFLFPFSQTSG), serve as a signal peptide directing secretion. 3 N-linked (GlcNAc...) asparagine glycosylation sites follow: Asn-62, Asn-118, and Asn-129. 5 consecutive transmembrane segments (helical) span residues 154-174 (IYLF…DVLS), 181-201 (YSAG…FIVY), 209-229 (PFYM…QLVF), 239-259 (HWHL…AVCY), and 269-289 (SINI…YAGI). Residues 410–431 (LFSTDEEDKEEEEDGWETEDDI) are compositionally biased toward acidic residues. Residues 410–446 (LFSTDEEDKEEEEDGWETEDDIKPEVTSPRMNNTRGK) are disordered. Residue Asn-441 is glycosylated (N-linked (GlcNAc...) asparagine).

It belongs to the NEMP family.

The protein resides in the nucleus inner membrane. Functionally, contributes to nuclear envelope stiffness in germ cells. Involved in male and female fertility. Essential for normal erythropoiesis. Required for efficient nuclear envelope opening and enucleation during the late stages of erythroblast maturation. This is Nuclear envelope integral membrane protein 1 from Danio rerio (Zebrafish).